Consider the following 1023-residue polypeptide: FHIP family protein AGAP011705 (1023 aa).

Polar residues-rich tracts occupy residues 1-13 (MSWL…RQSF), 806-825 (SMTS…SSSY), and 868-888 (GLNH…ASMN). 2 disordered regions span residues 1-39 (MSWL…AGGG) and 797-927 (GKLL…AETQ). Positions 889–906 (VPSPVGQQQHQHQSVSSV) are enriched in low complexity.

Belongs to the FHIP family.

The sequence is that of FHIP family protein AGAP011705 from Anopheles gambiae (African malaria mosquito).